A 288-amino-acid polypeptide reads, in one-letter code: MKHISAVYNPAFTNIASKLNQTELLKDAAQSLNIQLDFFTCFDINTNQDKTKLPFKSNTILFLDKNIALAQWLESVGLRVINSSIAINNADNKALSHAVLAQHPTIKQIPTLIGPQNFRLAWYPEKLEQFIEQIKRCFQFPVIVKSIYGSFGDYVFLCKDEQKLRQTLSGLTEQIIVQQYIATSNSEAVRVIVVNNQVVGALHTQNEGDFRSNLNKGAVGEPYQLSQEETKLAITISQAMQLFYCGIDFLFDQDRSLIFCEVNSNVQLTKSSMYLKTNLAIQLLASIA.

Residues 107–288 (KQIPTLIGPQ…LAIQLLASIA (182 aa)) enclose the ATP-grasp domain. ATP is bound by residues lysine 145 and 178-188 (QQYIATSNSEA). Aspartate 248, glutamate 261, and asparagine 263 together coordinate Mg(2+). Mn(2+) is bound by residues aspartate 248, glutamate 261, and asparagine 263.

It belongs to the RimK family.

This is an uncharacterized protein from Mycoplasma pneumoniae (strain ATCC 29342 / M129 / Subtype 1) (Mycoplasmoides pneumoniae).